The following is a 160-amino-acid chain: RNA pyrophosphohydrolase (160 aa).

The 145-residue stretch at 10–154 (PYRPCVGVML…KRDVYVAVLD (145 aa)) folds into the Nudix hydrolase domain. The Nudix box signature appears at 44–65 (GGVEKGEDPRAAALRELWEETG).

The protein belongs to the Nudix hydrolase family. RppH subfamily. Requires a divalent metal cation as cofactor.

Functionally, accelerates the degradation of transcripts by removing pyrophosphate from the 5'-end of triphosphorylated RNA, leading to a more labile monophosphorylated state that can stimulate subsequent ribonuclease cleavage. The polypeptide is RNA pyrophosphohydrolase (Roseobacter denitrificans (strain ATCC 33942 / OCh 114) (Erythrobacter sp. (strain OCh 114))).